A 197-amino-acid polypeptide reads, in one-letter code: Guanylate kinase (197 aa).

The 178-residue stretch at 10-187 (GSLFIVSAPA…AYQVLRSILI (178 aa)) folds into the Guanylate kinase-like domain. 17-24 (APAGTGKT) lines the ATP pocket.

Belongs to the guanylate kinase family.

It is found in the cytoplasm. The catalysed reaction is GMP + ATP = GDP + ADP. In terms of biological role, essential for recycling GMP and indirectly, cGMP. The sequence is that of Guanylate kinase from Protochlamydia amoebophila (strain UWE25).